An 859-amino-acid chain; its full sequence is Autoinducer 2 sensor kinase/phosphatase LuxQ (859 aa).

A run of 2 helical transmembrane segments spans residues 15–35 (ATLITKIIILVLAPIILGIFI) and 280–300 (IQHILAMLASIIGMIMIALMS). The Histidine kinase domain maps to 489-711 (KMSHEIRTPI…TFVITLPVKD (223 aa)). H492 bears the Phosphohistidine; by autocatalysis mark. The region spanning 736 to 851 (KVLLVEDNHT…ALHEAFVDFK (116 aa)) is the Response regulatory domain. Residue D785 is modified to 4-aspartylphosphate.

Binds the complex formed by AI-2 and LuxP.

It is found in the cell inner membrane. It catalyses the reaction ATP + protein L-histidine = ADP + protein N-phospho-L-histidine.. Its function is as follows. At low cell density, in absence of AI-2 (autoinducer 2), LuxQ has a kinase activity and autophosphorylates on a histidine residue. The phosphoryl group is then transferred to an aspartate residue in the response regulator domain. The phosphoryl group is transferred to LuxU, and ultimately to LuxO. At high cell density, in the presence of AI-2, the kinase activity is inactivated, and the response regulator domain has a phosphatase activity. The sequence is that of Autoinducer 2 sensor kinase/phosphatase LuxQ (luxQ) from Vibrio harveyi (Beneckea harveyi).